The following is a 228-amino-acid chain: Phosphatidylserine decarboxylase proenzyme (228 aa).

The Schiff-base intermediate with substrate; via pyruvic acid role is filled by serine 197. Serine 197 is modified (pyruvic acid (Ser); by autocatalysis).

This sequence belongs to the phosphatidylserine decarboxylase family. PSD-A subfamily. In terms of assembly, heterodimer of a large membrane-associated beta subunit and a small pyruvoyl-containing alpha subunit. Requires pyruvate as cofactor. Is synthesized initially as an inactive proenzyme. Formation of the active enzyme involves a self-maturation process in which the active site pyruvoyl group is generated from an internal serine residue via an autocatalytic post-translational modification. Two non-identical subunits are generated from the proenzyme in this reaction, and the pyruvate is formed at the N-terminus of the alpha chain, which is derived from the carboxyl end of the proenzyme. The post-translation cleavage follows an unusual pathway, termed non-hydrolytic serinolysis, in which the side chain hydroxyl group of the serine supplies its oxygen atom to form the C-terminus of the beta chain, while the remainder of the serine residue undergoes an oxidative deamination to produce ammonia and the pyruvoyl prosthetic group on the alpha chain.

The protein localises to the cell membrane. The catalysed reaction is a 1,2-diacyl-sn-glycero-3-phospho-L-serine + H(+) = a 1,2-diacyl-sn-glycero-3-phosphoethanolamine + CO2. It participates in phospholipid metabolism; phosphatidylethanolamine biosynthesis; phosphatidylethanolamine from CDP-diacylglycerol: step 2/2. Its function is as follows. Catalyzes the formation of phosphatidylethanolamine (PtdEtn) from phosphatidylserine (PtdSer). This chain is Phosphatidylserine decarboxylase proenzyme, found in Phocaeicola vulgatus (strain ATCC 8482 / DSM 1447 / JCM 5826 / CCUG 4940 / NBRC 14291 / NCTC 11154) (Bacteroides vulgatus).